Here is a 417-residue protein sequence, read N- to C-terminus: MSFPRKFGTAIHAALSFIVFFFLDLLDAILCVVYEFVDEILEENSTGCYCTAAAPQSQTTDENELSSETLFGRRNIFRGMWFLGFAREFKSKLSRKLRKSKIHQESVNRWSDCGCKSCKSWTKNEDGNLHVVVKDSTSREYSVQEPSENVIFIHGFMGSSHFWTETVFEHIQKDDYRLLAIDLLGFGESPKPRDSLYTLKDHVDTIERSVIKPYQLDSFHVVAHSMGCLIALALAAKHSNIVKSVTLVAPPYFPSSVEGSVLNRIARKRLWPPLAFGTAVMSWYEHIGRCVCFIICKHHKIWEWLIKLCIGKREIHWKIKDITRHTHHSAWHSMHNVICGGSKVADEHLETLIKSGVKIHLMQGDCDQIVPSHCSGNMKRTFPAVEVDIITGADHDSMISGRGEEFAEKLESIWCSC.

The N-terminal stretch at 1-49 (MSFPRKFGTAIHAALSFIVFFFLDLLDAILCVVYEFVDEILEENSTGCY) is a signal peptide. Cys50 is lipidated: N-palmitoyl cysteine. An AB hydrolase-1 domain is found at 150–259 (VIFIHGFMGS…PPYFPSSVEG (110 aa)). His154 is an active-site residue. Residue Ser225 is the Nucleophile of the active site. Residues Asp367 and His395 each act as charge relay system in the active site.

As to expression, expressed in epidermal cells.

It localises to the cell membrane. Its subcellular location is the secreted. The protein localises to the cell wall. Its function is as follows. Involved in cuticle development and morphogenesis. This chain is Probable lysophospholipase BODYGUARD 4, found in Arabidopsis thaliana (Mouse-ear cress).